Here is a 306-residue protein sequence, read N- to C-terminus: Agmatinase (306 aa).

Mn(2+) contacts are provided by H126, D149, H151, D153, D230, and D232.

It belongs to the arginase family. Agmatinase subfamily. The cofactor is Mn(2+).

The enzyme catalyses agmatine + H2O = urea + putrescine. The protein operates within amine and polyamine biosynthesis; putrescine biosynthesis via agmatine pathway; putrescine from agmatine: step 1/1. Functionally, catalyzes the formation of putrescine from agmatine. In Shigella dysenteriae serotype 1 (strain Sd197), this protein is Agmatinase.